The sequence spans 221 residues: Orotate phosphoribosyltransferase (221 aa).

Position 26 (Lys-26) interacts with 5-phospho-alpha-D-ribose 1-diphosphate. 34 to 35 contributes to the orotate binding site; it reads FF. 5-phospho-alpha-D-ribose 1-diphosphate is bound by residues 72 to 73, Arg-99, Lys-100, Lys-103, His-105, and 124 to 132; these read YK and DDVITAGTA. Positions 128 and 156 each coordinate orotate.

This sequence belongs to the purine/pyrimidine phosphoribosyltransferase family. PyrE subfamily. Homodimer. The cofactor is Mg(2+).

The catalysed reaction is orotidine 5'-phosphate + diphosphate = orotate + 5-phospho-alpha-D-ribose 1-diphosphate. Its pathway is pyrimidine metabolism; UMP biosynthesis via de novo pathway; UMP from orotate: step 1/2. In terms of biological role, catalyzes the transfer of a ribosyl phosphate group from 5-phosphoribose 1-diphosphate to orotate, leading to the formation of orotidine monophosphate (OMP). The protein is Orotate phosphoribosyltransferase of Colwellia psychrerythraea (strain 34H / ATCC BAA-681) (Vibrio psychroerythus).